The sequence spans 488 residues: Probable glycine dehydrogenase (decarboxylating) subunit 2 (488 aa).

Lys274 carries the N6-(pyridoxal phosphate)lysine modification.

Belongs to the GcvP family. C-terminal subunit subfamily. As to quaternary structure, the glycine cleavage system is composed of four proteins: P, T, L and H. In this organism, the P 'protein' is a heterodimer of two subunits. Requires pyridoxal 5'-phosphate as cofactor.

The enzyme catalyses N(6)-[(R)-lipoyl]-L-lysyl-[glycine-cleavage complex H protein] + glycine + H(+) = N(6)-[(R)-S(8)-aminomethyldihydrolipoyl]-L-lysyl-[glycine-cleavage complex H protein] + CO2. Its function is as follows. The glycine cleavage system catalyzes the degradation of glycine. The P protein binds the alpha-amino group of glycine through its pyridoxal phosphate cofactor; CO(2) is released and the remaining methylamine moiety is then transferred to the lipoamide cofactor of the H protein. The sequence is that of Probable glycine dehydrogenase (decarboxylating) subunit 2 from Listeria monocytogenes serotype 4a (strain HCC23).